The following is a 95-amino-acid chain: Large ribosomal subunit protein eL43 (95 aa).

The C4-type zinc finger occupies 38-59; that stretch reads CPDCGSEAVSREGTGIWQCGKC.

It belongs to the eukaryotic ribosomal protein eL43 family. Zn(2+) is required as a cofactor.

In Halobacterium salinarum (strain ATCC 29341 / DSM 671 / R1), this protein is Large ribosomal subunit protein eL43.